The sequence spans 236 residues: MTRRYWNINLEEMMEAGVHFGHGTRKWNPRMAPYISAKRKGIHITNLTRTARFLSEACDLLFDAASRGKQFLIVGTKNKAADLVASAAIRARCHYVNKKWLGGMSTNWSTTETRLHKFRDLRAEQKTARLARLPKRDAAMLKRQLSHLQTYLGGIKYMTRLPDIVIIVDQQEEYTAIRECVTLGIPMICLIDTNCDPDLADISIPANDDAIASIRLILNKLVSAICEGRSSYIRNR.

This sequence belongs to the universal ribosomal protein uS2 family.

Its subcellular location is the plastid. It is found in the chloroplast. The sequence is that of Small ribosomal subunit protein uS2c (rps2) from Buxus microphylla (Littleleaf boxwood).